The following is a 782-amino-acid chain: DNA repair and recombination protein RAD54-like (782 aa).

Polar residues predominate over residues 1-20; the sequence is MRRSLAPSQRGGQRLSSRND. The tract at residues 1–28 is disordered; it reads MRRSLAPSQRGGQRLSSRNDFTPPLLKK. Residues 2–9 form a required for chromatin remodeling, strand pairing activities and coupling of ATPase activity region; sequence RRSLAPSQ. Threonine 22 carries the phosphothreonine modification. Residues 168 to 343 enclose the Helicase ATP-binding domain; the sequence is EGKRGNFNGC…FSLVNFVNPE (176 aa). Position 181 to 188 (181 to 188) interacts with ATP; it reads DEMGLGKT. The short motif at 294–297 is the DEGH box element; it reads DEGH. One can recognise a Helicase C-terminal domain in the interval 501–658; sequence LLDFMLAAIR…NNESAEKHFT (158 aa). Polar residues predominate over residues 741–753; that stretch reads SQKIEATPATETS. Positions 741 to 782 are disordered; it reads SQKIEATPATETSVEAKLEPERRKRPAMPLSDDSADEDFQGF. A compositionally biased stretch (acidic residues) spans 773 to 782; the sequence is DSADEDFQGF.

The protein belongs to the SNF2/RAD54 helicase family. Interacts (via N-terminus) with spn-A/Rad51.

Its subcellular location is the nucleus. Functionally, involved in mitotic DNA repair and meiotic recombination. Functions in the recombinational DNA repair pathway. Essential for interhomolog gene conversion (GC), but may have a less important role in intersister GC than spn-A/Rad51. In the presence of DNA, spn-A/Rad51 enhances the ATPase activity of okr/Rad54. The chain is DNA repair and recombination protein RAD54-like from Drosophila persimilis (Fruit fly).